We begin with the raw amino-acid sequence, 341 residues long: Anthranilate phosphoribosyltransferase (341 aa).

5-phospho-alpha-D-ribose 1-diphosphate is bound by residues G84, 87–88, T92, 94–97, 112–120, and S124; these read GD, NVTT, and KCGNRSVSS. Residue G84 participates in anthranilate binding. Position 96 (T96) interacts with Mg(2+). Anthranilate is bound at residue N115. R170 is a binding site for anthranilate. The Mg(2+) site is built by D228 and E229.

This sequence belongs to the anthranilate phosphoribosyltransferase family. Homodimer. Mg(2+) is required as a cofactor.

It catalyses the reaction N-(5-phospho-beta-D-ribosyl)anthranilate + diphosphate = 5-phospho-alpha-D-ribose 1-diphosphate + anthranilate. It participates in amino-acid biosynthesis; L-tryptophan biosynthesis; L-tryptophan from chorismate: step 2/5. Catalyzes the transfer of the phosphoribosyl group of 5-phosphorylribose-1-pyrophosphate (PRPP) to anthranilate to yield N-(5'-phosphoribosyl)-anthranilate (PRA). The chain is Anthranilate phosphoribosyltransferase from Corynebacterium diphtheriae (strain ATCC 700971 / NCTC 13129 / Biotype gravis).